A 522-amino-acid chain; its full sequence is Maturase K (522 aa).

Belongs to the intron maturase 2 family. MatK subfamily.

The protein localises to the plastid. Its subcellular location is the chloroplast. Usually encoded in the trnK tRNA gene intron. Probably assists in splicing its own and other chloroplast group II introns. The polypeptide is Maturase K (Micranthus junceus (Micranthus plantagineus var. junceus)).